A 195-amino-acid polypeptide reads, in one-letter code: A-type ATP synthase subunit E (195 aa).

The protein belongs to the V-ATPase E subunit family. As to quaternary structure, has multiple subunits with at least A(3), B(3), C, D, E, F, H, I and proteolipid K(x).

It localises to the cell membrane. Component of the A-type ATP synthase that produces ATP from ADP in the presence of a proton gradient across the membrane. This is A-type ATP synthase subunit E from Staphylothermus marinus (strain ATCC 43588 / DSM 3639 / JCM 9404 / F1).